The chain runs to 144 residues: MKAVLTRVSSASVTVGDEVVGSIDCPETGGLLALVGVGAADEPDAWETMVRKIAELRILDNEKSVSDVGAPVLLVSQFTLMGKTARGRRPSWSDAAAGGIAEPVMRRIATGLRERGIHVEEGRFGAMMKVASVNEGPFTVLVEC.

The short motif at 136 to 137 is the Gly-cisPro motif, important for rejection of L-amino acids element; the sequence is GP.

This sequence belongs to the DTD family. Homodimer.

It localises to the cytoplasm. It carries out the reaction glycyl-tRNA(Ala) + H2O = tRNA(Ala) + glycine + H(+). The catalysed reaction is a D-aminoacyl-tRNA + H2O = a tRNA + a D-alpha-amino acid + H(+). Functionally, an aminoacyl-tRNA editing enzyme that deacylates mischarged D-aminoacyl-tRNAs. Also deacylates mischarged glycyl-tRNA(Ala), protecting cells against glycine mischarging by AlaRS. Acts via tRNA-based rather than protein-based catalysis; rejects L-amino acids rather than detecting D-amino acids in the active site. By recycling D-aminoacyl-tRNA to D-amino acids and free tRNA molecules, this enzyme counteracts the toxicity associated with the formation of D-aminoacyl-tRNA entities in vivo and helps enforce protein L-homochirality. This Corynebacterium efficiens (strain DSM 44549 / YS-314 / AJ 12310 / JCM 11189 / NBRC 100395) protein is D-aminoacyl-tRNA deacylase.